Here is a 572-residue protein sequence, read N- to C-terminus: Glutathione hydrolase 5 proenzyme (572 aa).

The Cytoplasmic portion of the chain corresponds to 1 to 6 (MAWGHR). Residues 7 to 29 (TTVCLVLLGVSLGLAIIVLAVVL) traverse the membrane as a helical; Signal-anchor for type II membrane protein segment. Residues 30–572 (PHHQASCRPD…LRKAGKASGY (543 aa)) lie on the Extracellular side of the membrane. A glycan (N-linked (GlcNAc...) asparagine) is linked at asparagine 98. Residue arginine 110 coordinates L-glutamate. Residues asparagine 185, asparagine 194, asparagine 204, asparagine 277, asparagine 303, asparagine 347, and asparagine 377 are each glycosylated (N-linked (GlcNAc...) asparagine). The Nucleophile role is filled by threonine 388. L-glutamate is bound by residues threonine 406, glutamate 427, and 453-454 (SS).

Belongs to the gamma-glutamyltransferase family. Heterodimer composed of the light and heavy chains. The active site is located in the light chain. Cleaved by autocatalysis into a large and a small subunit. In terms of processing, glycosylated. As to expression, widely expressed, but at low level, except in the airway epithelial cells. Detected in brain, heart, kidney, liver, lung, spleen, testis and trachea.

The protein resides in the membrane. It carries out the reaction glutathione + H2O = L-cysteinylglycine + L-glutamate. The catalysed reaction is an S-substituted glutathione + H2O = an S-substituted L-cysteinylglycine + L-glutamate. It catalyses the reaction leukotriene C4 + H2O = leukotriene D4 + L-glutamate. The enzyme catalyses S-[(2E,6E,10E)-geranylgeranyl]-L-glutathione + H2O = S-[(2E,6E,10E)-geranylgeranyl]-L-cysteinylglycine + L-glutamate. It carries out the reaction an N-terminal (5-L-glutamyl)-[peptide] + an alpha-amino acid = 5-L-glutamyl amino acid + an N-terminal L-alpha-aminoacyl-[peptide]. Its pathway is lipid metabolism; leukotriene D4 biosynthesis. It participates in sulfur metabolism; glutathione metabolism. Inhibited by serine-borate. Functionally, cleaves the gamma-glutamyl bond of extracellular glutathione tripeptide (gamma-Glu-Cys-Gly) and certain glutathione conjugates. Hydrolyzes glutathione releasing L-Glu and Cys-Gly dipeptide which is further metabolized to maintain extracellular cysteine levels but also to provide cysteine necessary for intracellular glutathione synthesis. Among glutathione-S-conjugates metabolizes leukotriene C4 (LTC4) and S-geranylgeranyl-glutathione (GGG), but is inactive toward gamma-glutamyl leucine. Converts extracellular LTC4 to LTD4 during acute inflammatory response. Acts as a negative regulator of GGG bioactivity. GGT5 (via GGG catabolism) and ABCC1 (via extracellular transport) establish GGG gradients within lymphoid tissues to position P2RY8-positive lymphocytes at germinal centers in lymphoid follicles and restrict their chemotactic transmigration from blood vessels to bone marrow parenchyma. The transpeptidation reaction, i.e. the transfer of gamma-glutamyl moiety to an acceptor molecule to yield a new gamma-glutamyl compound requires high concentration of dipeptide acceptor and is considered nonphysiological. The chain is Glutathione hydrolase 5 proenzyme (Ggt5) from Rattus norvegicus (Rat).